The sequence spans 202 residues: Holliday junction branch migration complex subunit RuvA (202 aa).

Residues 1–64 (MIDFLKGRLV…ETALEMFGFS (64 aa)) form a domain I region. Residues 65 to 143 (SELDRTAFLL…KQQVAVSAEL (79 aa)) are domain II. Residues 144–152 (PASDGVPVL) form a flexible linker region. Residues 152-202 (LAGRAENEALAALISLGYTPREAREALNRLPDRKLDAAGLVHAALRIMGSQ) form a domain III region.

Belongs to the RuvA family. In terms of assembly, homotetramer. Forms an RuvA(8)-RuvB(12)-Holliday junction (HJ) complex. HJ DNA is sandwiched between 2 RuvA tetramers; dsDNA enters through RuvA and exits via RuvB. An RuvB hexamer assembles on each DNA strand where it exits the tetramer. Each RuvB hexamer is contacted by two RuvA subunits (via domain III) on 2 adjacent RuvB subunits; this complex drives branch migration. In the full resolvosome a probable DNA-RuvA(4)-RuvB(12)-RuvC(2) complex forms which resolves the HJ.

Its subcellular location is the cytoplasm. Functionally, the RuvA-RuvB-RuvC complex processes Holliday junction (HJ) DNA during genetic recombination and DNA repair, while the RuvA-RuvB complex plays an important role in the rescue of blocked DNA replication forks via replication fork reversal (RFR). RuvA specifically binds to HJ cruciform DNA, conferring on it an open structure. The RuvB hexamer acts as an ATP-dependent pump, pulling dsDNA into and through the RuvAB complex. HJ branch migration allows RuvC to scan DNA until it finds its consensus sequence, where it cleaves and resolves the cruciform DNA. In Desulforudis audaxviator (strain MP104C), this protein is Holliday junction branch migration complex subunit RuvA.